We begin with the raw amino-acid sequence, 259 residues long: Small ribosomal subunit protein uS2 (259 aa).

The protein belongs to the universal ribosomal protein uS2 family.

The sequence is that of Small ribosomal subunit protein uS2 from Fervidobacterium nodosum (strain ATCC 35602 / DSM 5306 / Rt17-B1).